Reading from the N-terminus, the 310-residue chain is tRNA-cytidine(32) 2-sulfurtransferase (310 aa).

The short motif at 58-63 (SGGKDS) is the PP-loop motif element. Residues Cys133, Cys136, and Cys224 each contribute to the [4Fe-4S] cluster site.

The protein belongs to the TtcA family. As to quaternary structure, homodimer. It depends on Mg(2+) as a cofactor. [4Fe-4S] cluster is required as a cofactor.

It is found in the cytoplasm. It carries out the reaction cytidine(32) in tRNA + S-sulfanyl-L-cysteinyl-[cysteine desulfurase] + AH2 + ATP = 2-thiocytidine(32) in tRNA + L-cysteinyl-[cysteine desulfurase] + A + AMP + diphosphate + H(+). It participates in tRNA modification. Functionally, catalyzes the ATP-dependent 2-thiolation of cytidine in position 32 of tRNA, to form 2-thiocytidine (s(2)C32). The sulfur atoms are provided by the cysteine/cysteine desulfurase (IscS) system. The polypeptide is tRNA-cytidine(32) 2-sulfurtransferase (Paracidovorax citrulli (strain AAC00-1) (Acidovorax citrulli)).